A 511-amino-acid polypeptide reads, in one-letter code: RNA-splicing ligase RtcB homolog (511 aa).

Positions 125, 128, 233, 265, and 359 each coordinate Mn(2+). 232–236 (NHYAE) contributes to the GMP binding site. Residues 359-360 (HN), 408-411 (GGTM), S415, 434-437 (HGAG), and K510 each bind GMP. Residue H434 is the GMP-histidine intermediate of the active site.

It belongs to the RtcB family. As to quaternary structure, catalytic component of the tRNA-splicing ligase complex. Mn(2+) is required as a cofactor.

It catalyses the reaction a 3'-end 3'-phospho-ribonucleotide-RNA + a 5'-end dephospho-ribonucleoside-RNA + GTP = a ribonucleotidyl-ribonucleotide-RNA + GMP + diphosphate. It carries out the reaction a 3'-end 2',3'-cyclophospho-ribonucleotide-RNA + a 5'-end dephospho-ribonucleoside-RNA + GTP + H2O = a ribonucleotidyl-ribonucleotide-RNA + GMP + diphosphate + H(+). Its function is as follows. Catalytic subunit of the tRNA-splicing ligase complex that acts by directly joining spliced tRNA halves to mature-sized tRNAs by incorporating the precursor-derived splice junction phosphate into the mature tRNA as a canonical 3',5'-phosphodiester. May act as an RNA ligase with broad substrate specificity, and may function toward other RNAs. This chain is RNA-splicing ligase RtcB homolog, found in Plasmodium knowlesi (strain H).